We begin with the raw amino-acid sequence, 353 residues long: Virulence plasmid protein pGP2-D (353 aa).

In Chlamydia muridarum (strain MoPn / Nigg), this protein is Virulence plasmid protein pGP2-D.